We begin with the raw amino-acid sequence, 909 residues long: Protein virilizer (909 aa).

The span at 746–784 (STSKNTNTNVSKQQQQPQNSTPCSSNRFLFNKSSLISQE) shows a compositional bias: polar residues. Residues 746–824 (STSKNTNTNV…TNMTRQPTTL (79 aa)) form a disordered region. Residues 785–799 (SNGSNNNSGTQGPGS) show a composition bias toward low complexity. Polar residues predominate over residues 800-810 (MNESYSLDNSF). Residues 811-824 (NTTNTNMTRQPTTL) are compositionally biased toward low complexity. A phosphoserine mark is found at S856 and S898.

This sequence belongs to the vir family. In terms of assembly, component of the MIS (mRNA N6-methyladenosine (m6A) methylation) complex, at least composed of IME4, KAR4, MUM2, SLZ1, and VIR1. Interacts with KAR4. Interacts with SLZ1. Interacts with MUM2. Interacts with IME4.

The protein resides in the cytoplasm. Its subcellular location is the nucleus. It localises to the nucleolus. Functionally, component of the MIS complex, a complex that mediates N6-methyladenosine (m6A) methylation of meiotic mRNAs and is required for initiation of meiosis, progression through the meiotic divisions and sporulation. In the complex, performs a scaffolding role stabilizing the other complex members. The sequence is that of Protein virilizer from Saccharomyces cerevisiae (strain ATCC 204508 / S288c) (Baker's yeast).